The following is a 117-amino-acid chain: Thioredoxin (117 aa).

The 115-residue stretch at 2–116 folds into the Thioredoxin domain; the sequence is AISLTEEDFV…FENIIKDFFG (115 aa). A disulfide bridge links cysteine 40 with cysteine 43.

It belongs to the thioredoxin family.

Functionally, participates in various redox reactions through the reversible oxidation of its active center dithiol to a disulfide and catalyzes dithiol-disulfide exchange reactions. This is Thioredoxin (trxA) from Borreliella burgdorferi (strain ATCC 35210 / DSM 4680 / CIP 102532 / B31) (Borrelia burgdorferi).